The sequence spans 549 residues: Cation/acetate symporter ActP (549 aa).

Residues 1–32 (MKRVLTALAAALPFAAHAADAISGAVERQPTN) lie on the Periplasmic side of the membrane. Residues 33 to 55 (WQAIIMFLIFVVFTLGITYWASK) traverse the membrane as a helical segment. Residues 56 to 75 (RVRSRSDYYTAGGNITGFQN) lie on the Cytoplasmic side of the membrane. Residues 76–98 (GLAIAGDYMSAASFLGISALVFT) form a helical membrane-spanning segment. Residues 99–102 (SGYD) are Periplasmic-facing. A helical membrane pass occupies residues 103–125 (GLIYSLGFLVGWPIILFLIAERL). Topologically, residues 126–145 (RNLGRYTFADVASYRLKQGP) are cytoplasmic. Residues 146 to 168 (IRILSACGSLVVVALYLIAQMVG) traverse the membrane as a helical segment. The Periplasmic portion of the chain corresponds to 169 to 182 (AGKLIELLFGLNYH). The chain crosses the membrane as a helical span at residues 183 to 205 (IAVVLVGVLMMMYVLFGGMLATT). Over 206 to 211 (WVQIIK) the chain is Cytoplasmic. The chain crosses the membrane as a helical span at residues 212 to 234 (AVLLLFGASFMAFMVMKHVGFSF). Residues 235 to 260 (NNLFTEAMAVHPKGTAIMSPGGLVQD) lie on the Periplasmic side of the membrane. A helical transmembrane segment spans residues 261-283 (PISALSLGLGLIFGTAGLPHILM). Over 284–302 (RFFTVSDAREARKSVFYAT) the chain is Cytoplasmic. The helical transmembrane segment at 303 to 325 (GFMGYFYILTFIIGFGAIMLVGA) threads the bilayer. Over 326–361 (NPAYKDAAGALIGGNNMAAVHLANAVGGNLFLGFIS) the chain is Periplasmic. A helical membrane pass occupies residues 362 to 384 (AVAFATILAVVAGLTLAGASAVS). Residues 385-403 (HDLYANVFRKGATEREELK) lie on the Cytoplasmic side of the membrane. Residues 404-423 (VSKITVLVLDVIAIILGVLF) form a helical membrane-spanning segment. At 424–427 (ENQN) the chain is on the periplasmic side. The helical transmembrane segment at 428–450 (IAFMVGLAFAIAASCNFPIILLS) threads the bilayer. The Cytoplasmic segment spans residues 451–461 (MYWSKLTTRGA). Residues 462–484 (MLGGWLGLLTAVVLMILGPTIWV) traverse the membrane as a helical segment. The Periplasmic portion of the chain corresponds to 485-493 (QILGHEKAI). Residues 494–516 (FPYEYPALFSISVAFLGIWFFSA) traverse the membrane as a helical segment. The Cytoplasmic portion of the chain corresponds to 517–549 (TDNSAEGNREREQFRAQFIRSQTGFGVQQGRAH).

Belongs to the sodium:solute symporter (SSF) (TC 2.A.21) family.

It localises to the cell inner membrane. Transports acetate. The chain is Cation/acetate symporter ActP (actP) from Salmonella typhi.